A 546-amino-acid polypeptide reads, in one-letter code: Phosphatidylinositol 4-phosphate 5-kinase type-1 alpha (546 aa).

One can recognise a PIPK domain in the interval 65 to 433 (TSSALKGAIQ…RFQRFMCNTV (369 aa)). K87 participates in a covalent cross-link: Glycyl lysine isopeptide (Lys-Gly) (interchain with G-Cter in ubiquitin). The tract at residues 441 to 522 (PSPTKKFRSG…PGPSFSPAVG (82 aa)) is disordered. Residues 449–461 (SGPSFSRRSGPSG) show a composition bias toward low complexity. The segment covering 462–471 (NSCTPSQPTA) has biased composition (polar residues). The span at 473 to 493 (GEHKAQVTTKAEVEPDIHLGR) shows a compositional bias: basic and acidic residues.

As to quaternary structure, interacts with RAC1. Interacts with TUT1. Forms a complex with CDH1/E-cadherin, CTNNB1/beta-catenin and CTNND1 at the plasma membrane upon calcium stimulation. Found in a ternary complex with IRS1 and DGKZ in the absence of insulin stimulation. Interacts with DGKZ. Interacts with PIP4K2C; the interaction inhibits PIP5K1A kinase activity.

It is found in the cell membrane. The protein localises to the cytoplasm. Its subcellular location is the nucleus. It localises to the nucleus speckle. The protein resides in the cell projection. It is found in the ruffle. The protein localises to the lamellipodium. The enzyme catalyses a 1,2-diacyl-sn-glycero-3-phospho-(1D-myo-inositol 4-phosphate) + ATP = a 1,2-diacyl-sn-glycero-3-phospho-(1D-myo-inositol-4,5-bisphosphate) + ADP + H(+). The catalysed reaction is 1-octadecanoyl-2-(5Z,8Z,11Z,14Z)-eicosatetraenoyl-sn-glycero-3-phospho-1D-myo-inositol 4-phosphate + ATP = 1-octadecanoyl-2-(5Z,8Z,11Z,14Z)-eicosatetraenoyl-sn-glycero-3-phospho-1D-myo-inositol 4,5-bisphosphate + ADP + H(+). It carries out the reaction 1,2-dihexadecanoyl-sn-glycero-3-phospho-(1D-myo-inositol-4-phosphate) + ATP = 1,2-dihexadecanoyl-sn-glycero-3-phospho-(1D-myo-inositol-4,5-bisphosphate) + ADP + H(+). It catalyses the reaction 1-octadecanoyl-2-(9Z)-octadecenoyl-sn-glycero-3-phospho-1D-myo-inositol 4-phosphate + ATP = 1-octadecanoyl-2-(9Z)-octadecenoyl-sn-glycero-3-phospho-1D-myo-inositol 4,5-bisphosphate + ADP + H(+). The enzyme catalyses 1-octadecanoyl-2-(9Z)-octadecenoyl-sn-glycero-3-phospho-1D-myo-inositol + ATP = 1-octadecanoyl-2-(9Z)-octadecenoyl-sn-glycero-3-phospho-1D-myo-inositol 5-phosphate + ADP + H(+). The catalysed reaction is 1-octadecanoyl-2-(9Z,12Z)-octadecadienoyl-sn-glycero-3-phospho-1D-myo-inositol + ATP = 1-octadecanoyl-2-(9Z,12Z)-octadecadienoyl-sn-glycero-3-phospho-1D-myo-inositol 5-phosphate + ADP + H(+). It carries out the reaction 1-octadecanoyl-2-(5Z,8Z,11Z,14Z-eicosatetraenoyl)-sn-glycero-3-phospho-(1D-myo-inositol) + ATP = 1-octadecanoyl-2-(5Z,8Z,11Z,14Z)-eicosatetraenoyl-sn-glycero-3-phospho-1D-myo-inositol 5-phosphate + ADP + H(+). It catalyses the reaction 1,2-di-(9Z,12Z)-octadecadienoyl-sn-glycero-3-phospho-1D-myo-inositol + ATP = 1,2-di(9Z,12Z)-octadecadienoyl-sn-glycero-3-phospho-1D-myo-inositol 5-phosphate + ADP + H(+). Functionally, catalyzes the phosphorylation of phosphatidylinositol 4-phosphate (PtdIns(4)P/PI4P) to form phosphatidylinositol 4,5-bisphosphate (PtdIns(4,5)P2/PIP2), a lipid second messenger that regulates several cellular processes such as signal transduction, vesicle trafficking, actin cytoskeleton dynamics, cell adhesion, and cell motility. PtdIns(4,5)P2 can directly act as a second messenger or can be utilized as a precursor to generate other second messengers: inositol 1,4,5-trisphosphate (IP3), diacylglycerol (DAG) or phosphatidylinositol-3,4,5-trisphosphate (PtdIns(3,4,5)P3/PIP3). PIP5K1A-mediated phosphorylation of PtdIns(4)P is the predominant pathway for PtdIns(4,5)P2 synthesis. Can also use phosphatidylinositol (PtdIns) as substrate in vitro. Together with PIP5K1C, is required for phagocytosis, both enzymes regulating different types of actin remodeling at sequential steps. Promotes particle ingestion by activating the WAS GTPase-binding protein that induces Arp2/3 dependent actin polymerization at the nascent phagocytic cup. Together with PIP5K1B, is required, after stimulation by G-protein coupled receptors, for the synthesis of IP3 that will induce stable platelet adhesion. Recruited to the plasma membrane by the E-cadherin/beta-catenin complex where it provides the substrate PtdIns(4,5)P2 for the production of PtdIns(3,4,5)P3, IP3 and DAG, that will mobilize internal calcium and drive keratinocyte differentiation. Positively regulates insulin-induced translocation of SLC2A4 to the cell membrane in adipocytes. Together with PIP5K1C has a role during embryogenesis. Independently of its catalytic activity, is required for membrane ruffling formation, actin organization and focal adhesion formation during directional cell migration by controlling integrin-induced translocation of the small GTPase RAC1 to the plasma membrane. Also functions in the nucleus where it acts as an activator of TUT1 adenylyltransferase activity in nuclear speckles, thereby regulating mRNA polyadenylation of a select set of mRNAs. This is Phosphatidylinositol 4-phosphate 5-kinase type-1 alpha from Rattus norvegicus (Rat).